We begin with the raw amino-acid sequence, 633 residues long: Probable potassium transport system protein Kup 2 (633 aa).

12 helical membrane passes run 18–38 (FVGL…TSPL), 61–81 (LISL…VLFL), 107–127 (VPVL…DAMI), 143–163 (ITPA…IVLF), 176–196 (FFGP…VIHI), 211–231 (ALSF…AVFL), 255–275 (WFVL…ALVL), 293–313 (ALLP…QAVI), 345–365 (IYVP…IFSF), 371–391 (LATA…MLAF), 402–422 (FMLA…FLAA), and 429–449 (DGGW…WTWT).

The protein belongs to the HAK/KUP transporter (TC 2.A.72) family.

Its subcellular location is the cell inner membrane. It catalyses the reaction K(+)(in) + H(+)(in) = K(+)(out) + H(+)(out). In terms of biological role, transport of potassium into the cell. Likely operates as a K(+):H(+) symporter. In Rhizobium etli (strain ATCC 51251 / DSM 11541 / JCM 21823 / NBRC 15573 / CFN 42), this protein is Probable potassium transport system protein Kup 2.